Reading from the N-terminus, the 483-residue chain is Replication factor C large subunit (483 aa).

Gly43–Thr50 contacts ATP. Over residues Glu417–Ile442 the composition is skewed to basic and acidic residues. The interval Glu417 to Phe483 is disordered. The span at Ser448–Pro457 shows a compositional bias: polar residues.

This sequence belongs to the activator 1 small subunits family. RfcL subfamily. As to quaternary structure, heteromultimer composed of small subunits (RfcS) and large subunits (RfcL).

Its function is as follows. Part of the RFC clamp loader complex which loads the PCNA sliding clamp onto DNA. This is Replication factor C large subunit from Methanospirillum hungatei JF-1 (strain ATCC 27890 / DSM 864 / NBRC 100397 / JF-1).